A 297-amino-acid polypeptide reads, in one-letter code: Bifunctional protein FolD 1 (297 aa).

NADP(+) is bound by residues 174–176 (GRS), Ser199, and Ile240.

Belongs to the tetrahydrofolate dehydrogenase/cyclohydrolase family. Homodimer.

It carries out the reaction (6R)-5,10-methylene-5,6,7,8-tetrahydrofolate + NADP(+) = (6R)-5,10-methenyltetrahydrofolate + NADPH. The catalysed reaction is (6R)-5,10-methenyltetrahydrofolate + H2O = (6R)-10-formyltetrahydrofolate + H(+). Its pathway is one-carbon metabolism; tetrahydrofolate interconversion. Catalyzes the oxidation of 5,10-methylenetetrahydrofolate to 5,10-methenyltetrahydrofolate and then the hydrolysis of 5,10-methenyltetrahydrofolate to 10-formyltetrahydrofolate. This is Bifunctional protein FolD 1 from Acinetobacter baylyi (strain ATCC 33305 / BD413 / ADP1).